A 301-amino-acid polypeptide reads, in one-letter code: Recombination-associated protein RdgC (301 aa).

It belongs to the RdgC family.

It localises to the cytoplasm. Its subcellular location is the nucleoid. Functionally, may be involved in recombination. The sequence is that of Recombination-associated protein RdgC from Xanthomonas oryzae pv. oryzae (strain KACC10331 / KXO85).